The chain runs to 398 residues: Exodeoxyribonuclease 7 large subunit (398 aa).

It belongs to the XseA family. As to quaternary structure, heterooligomer composed of large and small subunits.

The protein localises to the cytoplasm. The catalysed reaction is Exonucleolytic cleavage in either 5'- to 3'- or 3'- to 5'-direction to yield nucleoside 5'-phosphates.. Bidirectionally degrades single-stranded DNA into large acid-insoluble oligonucleotides, which are then degraded further into small acid-soluble oligonucleotides. This is Exodeoxyribonuclease 7 large subunit from Salinibacter ruber (strain DSM 13855 / M31).